The chain runs to 265 residues: Pre-mRNA-splicing factor cwf15 (265 aa).

2 disordered regions span residues 1-31 (MTTA…ALPA) and 62-197 (AAHF…ALEQ). Over residues 113–125 (EADEDASDSDDSV) the composition is skewed to acidic residues. Positions 143–155 (SNSQESVDSSNSE) are enriched in low complexity. A coiled-coil region spans residues 155-205 (ESSDEESDSEDETQQLLRELENIKQERKREQMLQEEKNRALEQEKREREIA). A compositionally biased stretch (acidic residues) spans 156–167 (SSDEESDSEDET). Basic and acidic residues predominate over residues 172–197 (RELENIKQERKREQMLQEEKNRALEQ).

It belongs to the CWC15 family. Belongs to the 40S cdc5-associated complex (or cwf complex), a spliceosome sub-complex reminiscent of a late-stage spliceosome composed of the U2, U5 and U6 snRNAs and at least brr2, cdc5, cwf2/prp3, cwf3/syf1, cwf4/syf3, cwf5/ecm2, spp42/cwf6, cwf7/spf27, cwf8, cwf9, cwf10, cwf11, cwf12, prp45/cwf13, cwf14, cwf15, cwf16, cwf17, cwf18, cwf19, cwf20, cwf21, cwf22, cwf23, cwf24, cwf25, cwf26, cyp7/cwf27, cwf28, cwf29/ist3, lea1, msl1, prp5/cwf1, prp10, prp12/sap130, prp17, prp22, sap61, sap62, sap114, sap145, slu7, smb1, smd1, smd3, smf1, smg1 and syf2.

Its subcellular location is the nucleus. Functionally, involved in pre-mRNA splicing. This chain is Pre-mRNA-splicing factor cwf15 (cwf15), found in Schizosaccharomyces pombe (strain 972 / ATCC 24843) (Fission yeast).